The primary structure comprises 198 residues: Large ribosomal subunit protein bL9 (198 aa).

Belongs to the bacterial ribosomal protein bL9 family.

Binds to the 23S rRNA. This is Large ribosomal subunit protein bL9 from Bartonella tribocorum (strain CIP 105476 / IBS 506).